The sequence spans 59 residues: Large ribosomal subunit protein uL30 (59 aa).

Belongs to the universal ribosomal protein uL30 family. Part of the 50S ribosomal subunit.

This Edwardsiella ictaluri (strain 93-146) protein is Large ribosomal subunit protein uL30.